The sequence spans 828 residues: DNA topoisomerase 3 (828 aa).

A Toprim domain is found at 4–149 (RILNVAEKPS…KFEFYRAHFS (146 aa)). One can recognise a Topo IA-type catalytic domain in the interval 167-617 (NEKDSIAVDT…STIEKYKQLY (451 aa)). The active-site O-(5'-phospho-DNA)-tyrosine intermediate is the Tyr-361. The segment at 763-828 (QQQQQQQQQQ…SDRNNNNFIF (66 aa)) is disordered.

This sequence belongs to the type IA topoisomerase family.

The enzyme catalyses ATP-independent breakage of single-stranded DNA, followed by passage and rejoining.. Its function is as follows. Releases the supercoiling and torsional tension of DNA introduced during the DNA replication and transcription by transiently cleaving and rejoining one strand of the DNA duplex. Introduces a single-strand break via transesterification at a target site in duplex DNA. The scissile phosphodiester is attacked by the catalytic tyrosine of the enzyme, resulting in the formation of a DNA-(5'-phosphotyrosyl)-enzyme intermediate and the expulsion of a 3'-OH DNA strand. The free DNA strand than undergoes passage around the unbroken strand thus removing DNA supercoils. Finally, in the religation step, the DNA 3'-OH attacks the covalent intermediate to expel the active-site tyrosine and restore the DNA phosphodiester backbone. This Dictyostelium discoideum (Social amoeba) protein is DNA topoisomerase 3 (top3).